A 297-amino-acid polypeptide reads, in one-letter code: 33 kDa chaperonin (297 aa).

2 disulfide bridges follow: Cys232–Cys234 and Cys266–Cys269.

It belongs to the HSP33 family. In terms of processing, under oxidizing conditions two disulfide bonds are formed involving the reactive cysteines. Under reducing conditions zinc is bound to the reactive cysteines and the protein is inactive.

Its subcellular location is the cytoplasm. Functionally, redox regulated molecular chaperone. Protects both thermally unfolding and oxidatively damaged proteins from irreversible aggregation. Plays an important role in the bacterial defense system toward oxidative stress. The chain is 33 kDa chaperonin from Pseudomonas aeruginosa (strain UCBPP-PA14).